Consider the following 340-residue polypeptide: MFMKTDDFDYKLPEELIASYPLENRDASRLLKLNKQTGEIADYKFTDFIDFINPGDLLVFNNSKVMLARLYGSKTTGAKLEYLIERIKTPKLFETHIKANRSPAIGSEIYVEDTLAKVLDKDGGMYLLEIQGDKDIYQLMEEFGHIPLPPYMKRDDEEFDAERYQTVYAQDLGSVAAPTAGLHFSKELMQQIKDKGVDIAYITLHVGSGTFKPVQVDDVESHKMHAEVISVPVEVCQKIRQTKENGGRVIAIGTTSVRSLETAGQNGQIEPYQGETDIFLYPGKKFNVVDAMITNFHLPKSTLIMLVSAFADKEKIIKAYEHAIAERYRFFSYGDAMFIF.

This sequence belongs to the QueA family. In terms of assembly, monomer.

It is found in the cytoplasm. It catalyses the reaction 7-aminomethyl-7-carbaguanosine(34) in tRNA + S-adenosyl-L-methionine = epoxyqueuosine(34) in tRNA + adenine + L-methionine + 2 H(+). It participates in tRNA modification; tRNA-queuosine biosynthesis. In terms of biological role, transfers and isomerizes the ribose moiety from AdoMet to the 7-aminomethyl group of 7-deazaguanine (preQ1-tRNA) to give epoxyqueuosine (oQ-tRNA). In Francisella tularensis subsp. tularensis (strain FSC 198), this protein is S-adenosylmethionine:tRNA ribosyltransferase-isomerase.